Here is a 1103-residue protein sequence, read N- to C-terminus: Centrosomal protein of 126 kDa (1103 aa).

The segment covering 1–12 (MLAGRPGAQSAG) has biased composition (low complexity). The tract at residues 1-36 (MLAGRPGAQSAGAGVGAGPPDAPGARDGGGRPRPGA) is disordered. Coiled coils occupy residues 43-116 (HLEK…FQRA) and 182-222 (QKHL…KLLE). 2 disordered regions span residues 380–409 (NTAE…ESPT) and 723–812 (ESKA…PGQS). The segment covering 723-735 (ESKAPVHASDSKT) has biased composition (basic and acidic residues). The span at 736 to 748 (QKTKPQRGVKFTR) shows a compositional bias: basic residues. Composition is skewed to polar residues over residues 763–784 (RKPT…QTQG) and 798–812 (NIKS…PGQS).

Interacts with DCTN1.

It is found in the midbody. It localises to the cytoplasm. The protein resides in the cytoskeleton. The protein localises to the microtubule organizing center. Its subcellular location is the centrosome. It is found in the cilium basal body. Functionally, participate in cytokinesis. Necessary for microtubules and mitotic spindle organization. Involved in primary cilium formation. This chain is Centrosomal protein of 126 kDa, found in Mus musculus (Mouse).